A 210-amino-acid polypeptide reads, in one-letter code: Glycerol-3-phosphate acyltransferase (210 aa).

Helical transmembrane passes span 1–21, 53–73, 87–107, 122–142, and 147–167; these read MLLSVVAIALLAYLLGSFPAG, GPALVVFITDILKGVLAVVAA, IAWLAAFAAIIAVVGHSLPVW, VLLALSPVVGLSGFGAFLLLL, and IVSLGSIAGAITVIVLMLILP.

This sequence belongs to the PlsY family. Probably interacts with PlsX.

The protein resides in the cell inner membrane. It carries out the reaction an acyl phosphate + sn-glycerol 3-phosphate = a 1-acyl-sn-glycero-3-phosphate + phosphate. It functions in the pathway lipid metabolism; phospholipid metabolism. Functionally, catalyzes the transfer of an acyl group from acyl-phosphate (acyl-PO(4)) to glycerol-3-phosphate (G3P) to form lysophosphatidic acid (LPA). This enzyme utilizes acyl-phosphate as fatty acyl donor, but not acyl-CoA or acyl-ACP. The chain is Glycerol-3-phosphate acyltransferase from Synechococcus elongatus (strain ATCC 33912 / PCC 7942 / FACHB-805) (Anacystis nidulans R2).